Here is a 729-residue protein sequence, read N- to C-terminus: Neurochondrin (729 aa).

At Ser2 the chain carries N-acetylserine. Phosphoserine is present on Ser2. 2 S-palmitoyl cysteine lipidation sites follow: Cys3 and Cys4. Arg75 carries the post-translational modification Asymmetric dimethylarginine. Ser448 carries the phosphoserine modification.

The protein belongs to the neurochondrin family. As to quaternary structure, interacts with MCHR1. Interacts with SEMA4C. Interacts with DIAPH1 (via FH3 domain). Interacts with GRM5. Post-translationally, palmitoylated. Palmitoylation by ZDHHC1, ZDHHC3 and ZDHHC11 regulates the association of NCDN with endosome membranes. May also be palmitoylated by ZDHHC7.

It localises to the cytoplasm. It is found in the cytosol. The protein localises to the endosome membrane. Its subcellular location is the cell projection. The protein resides in the dendrite. It localises to the postsynapse. In terms of biological role, probably involved in signal transduction, in the nervous system, via increasing cell surface localization of GRM5 and positively regulating its signaling. Required for the spatial learning process. Acts as a negative regulator of Ca(2+)-calmodulin-dependent protein kinase 2 (CaMK2) phosphorylation. May play a role in modulating melanin-concentrating hormone-mediated functions via its interaction with MCHR1 that interferes with G protein-coupled signal transduction. May be involved in bone metabolism. May also be involved in neurite outgrowth. This chain is Neurochondrin (NCDN), found in Bos taurus (Bovine).